The sequence spans 68 residues: Large ribosomal subunit protein bL35 (68 aa).

Belongs to the bacterial ribosomal protein bL35 family.

The polypeptide is Large ribosomal subunit protein bL35 (Onion yellows phytoplasma (strain OY-M)).